A 1408-amino-acid polypeptide reads, in one-letter code: ABC multidrug transporter MDR1 (1408 aa).

A compositionally biased stretch (polar residues) spans 79-88 (IAASSDTLRN). Positions 79 to 102 (IAASSDTLRNSPLEKPISNAFSKS) are disordered. The next 2 helical transmembrane spans lie at 147–167 (FAAP…VAAG) and 223–243 (LYLM…MFIW). Positions 157–464 (VLGLVLAVAA…LAPELAAVTK (308 aa)) constitute an ABC transmembrane type-1 1 domain. Residue Asn244 is glycosylated (N-linked (GlcNAc...) asparagine). 4 helical membrane-spanning segments follow: residues 296–316 (KVAL…LAFV), 321–341 (LAGA…IMMT), 408–428 (IMFF…GILV), and 436–456 (GIVI…AMLA). Residues 499-744 (ISFENVKFHY…ENGPYAQLVN (246 aa)) form the ABC transporter 1 domain. 534-541 (GASGSGKS) is a binding site for ATP. N-linked (GlcNAc...) asparagine glycosylation occurs at Asn606. 2 consecutive transmembrane segments (helical) span residues 838–858 (IIAF…AILF) and 882–902 (LWYF…SAGF). An ABC transmembrane type-1 2 domain is found at 838-1125 (IIAFIAAICA…VFTFVPDASK (288 aa)). Asn934 carries N-linked (GlcNAc...) asparagine glycosylation. The next 4 helical transmembrane spans lie at 952 to 972 (GLFG…IGGC), 981 to 999 (LLAL…GGYI), 1072 to 1092 (GLTF…IIDA), and 1099 to 1119 (FYTV…VFTF). 2 N-linked (GlcNAc...) asparagine glycosylation sites follow: Asn1127 and Asn1182. Residues 1162–1402 (VRIEGVHFRY…KGGYYELVQM (241 aa)) form the ABC transporter 2 domain. 1197–1204 (GPSGCGKS) contributes to the ATP binding site. An N-linked (GlcNAc...) asparagine glycan is attached at Asn1404.

This sequence belongs to the ABC transporter superfamily. ABCB family. Multidrug resistance exporter (TC 3.A.1.201) subfamily.

The protein localises to the cell membrane. The enzyme catalyses itraconazole(in) + ATP + H2O = itraconazole(out) + ADP + phosphate + H(+). The catalysed reaction is voriconazole(in) + ATP + H2O = voriconazole(out) + ADP + phosphate + H(+). It catalyses the reaction fluconazole(in) + ATP + H2O = fluconazole(out) + ADP + phosphate + H(+). Its function is as follows. Pleiotropic ABC efflux transporter that confers resistance to structurally and functionally unrelated compounds including azoles such as fluconazole (FLC), itraconazole (ITC), posaconazole (POS), and voriconazole (VRC). The protein is ABC multidrug transporter MDR1 of Cryptococcus neoformans var. grubii serotype A (strain H99 / ATCC 208821 / CBS 10515 / FGSC 9487) (Filobasidiella neoformans var. grubii).